Consider the following 197-residue polypeptide: Endonuclease V (197 aa).

2 residues coordinate Mg(2+): D37 and E101.

It belongs to the endonuclease V family. Requires Mg(2+) as cofactor.

Its subcellular location is the cytoplasm. The enzyme catalyses Endonucleolytic cleavage at apurinic or apyrimidinic sites to products with a 5'-phosphate.. DNA repair enzyme involved in the repair of deaminated bases. Selectively cleaves double-stranded DNA at the second phosphodiester bond 3' to a deoxyinosine leaving behind the intact lesion on the nicked DNA. In Thermococcus kodakarensis (strain ATCC BAA-918 / JCM 12380 / KOD1) (Pyrococcus kodakaraensis (strain KOD1)), this protein is Endonuclease V.